The primary structure comprises 174 residues: Serine protease 2 (174 aa).

Residues Cys-15 and Cys-36 are joined by a disulfide bond. Residues His-35, Asp-65, and Ser-147 each act as charge relay system in the active site. Cys-141 and Cys-168 are disulfide-bonded.

Belongs to the peptidase S1 family.

It localises to the secreted. In terms of biological role, broad substrate specificity. This Streptomyces fradiae (Streptomyces roseoflavus) protein is Serine protease 2.